Here is a 305-residue protein sequence, read N- to C-terminus: Probable aspartoacylase (305 aa).

Positions 13 and 16 each coordinate Zn(2+). Substrate-binding positions include R55 and N62–R63. A Zn(2+)-binding site is contributed by H105. Substrate-binding residues include E163 and Y273.

It belongs to the AspA/AstE family. Aspartoacylase subfamily. Requires Zn(2+) as cofactor.

It catalyses the reaction an N-acyl-L-aspartate + H2O = a carboxylate + L-aspartate. This Prochlorococcus marinus (strain NATL1A) protein is Probable aspartoacylase.